The sequence spans 68 residues: Conotoxin Cal12.1p3 (68 aa).

Positions 1–21 are excised as a propeptide; that stretch reads DLITNSYTRGKPRHVTSWPKL.

Post-translationally, contains 4 disulfide bonds. As to expression, expressed by the venom duct.

The protein resides in the secreted. This chain is Conotoxin Cal12.1p3, found in Californiconus californicus (California cone).